The sequence spans 281 residues: ATP phosphoribosyltransferase (281 aa).

This sequence belongs to the ATP phosphoribosyltransferase family. Long subfamily. Mg(2+) is required as a cofactor.

It localises to the cytoplasm. It carries out the reaction 1-(5-phospho-beta-D-ribosyl)-ATP + diphosphate = 5-phospho-alpha-D-ribose 1-diphosphate + ATP. It functions in the pathway amino-acid biosynthesis; L-histidine biosynthesis; L-histidine from 5-phospho-alpha-D-ribose 1-diphosphate: step 1/9. Feedback inhibited by histidine. Functionally, catalyzes the condensation of ATP and 5-phosphoribose 1-diphosphate to form N'-(5'-phosphoribosyl)-ATP (PR-ATP). Has a crucial role in the pathway because the rate of histidine biosynthesis seems to be controlled primarily by regulation of HisG enzymatic activity. In Salinispora tropica (strain ATCC BAA-916 / DSM 44818 / JCM 13857 / NBRC 105044 / CNB-440), this protein is ATP phosphoribosyltransferase.